The sequence spans 65 residues: Toxin AaHIT4 (65 aa).

One can recognise an LCN-type CS-alpha/beta domain in the interval 1 to 64 (EHGYLLNKYT…LWNYKTNKCD (64 aa)). Intrachain disulfides connect Cys-12-Cys-63, Cys-16-Cys-38, Cys-23-Cys-45, and Cys-27-Cys-47.

It belongs to the long (4 C-C) scorpion toxin superfamily. Sodium channel inhibitor family. Expressed by the venom gland.

It is found in the secreted. In terms of biological role, has a toxic effect on insects and mammals and is capable of competing with anti-insect scorpion toxins for binding to the sodium channel (Nav) of insects. It also modulates the binding of alpha-type and beta-type anti-mammal scorpion toxins to the mammal sodium channel. It may act on both site 3 and site 4 of voltage-gated sodium channels. This Androctonus australis (Sahara scorpion) protein is Toxin AaHIT4.